The primary structure comprises 364 residues: Histidinol-phosphate aminotransferase (364 aa).

An N6-(pyridoxal phosphate)lysine modification is found at lysine 226.

This sequence belongs to the class-II pyridoxal-phosphate-dependent aminotransferase family. Histidinol-phosphate aminotransferase subfamily. Homodimer. Pyridoxal 5'-phosphate serves as cofactor.

It catalyses the reaction L-histidinol phosphate + 2-oxoglutarate = 3-(imidazol-4-yl)-2-oxopropyl phosphate + L-glutamate. The protein operates within amino-acid biosynthesis; L-histidine biosynthesis; L-histidine from 5-phospho-alpha-D-ribose 1-diphosphate: step 7/9. This Campylobacter jejuni subsp. jejuni serotype O:2 (strain ATCC 700819 / NCTC 11168) protein is Histidinol-phosphate aminotransferase.